A 379-amino-acid chain; its full sequence is Presenilin-associated rhomboid-like protein, mitochondrial (379 aa).

The transit peptide at 1–52 directs the protein to the mitochondrion; that stretch reads MAWRGWAQRGWGCGQAWAASVGGRSCEELTAALTPPRLLGRRFNFFIQQKCG. The Mitochondrial matrix portion of the chain corresponds to 53 to 101; sequence FRKAPRKVEPRRSDTGTSGEAYKRSALIPPVEETVFYPSPYPIRSLIKP. Residue S65 is modified to Phosphoserine. T69 carries the post-translational modification Phosphothreonine. S70 carries the post-translational modification Phosphoserine. The chain crosses the membrane as a helical span at residues 102–121; sequence LFFTVGFTGCAFGSAAIWQY. Over 122–167 the chain is Mitochondrial intermembrane; the sequence is ESLKSRVQSYFDGIKADWLDSIRPQKEGDFRKEINKWWNNLSDGQR. Residues 168–187 form a helical membrane-spanning segment; that stretch reads TVTGIIAANVLVFCLWRVPS. Topologically, residues 188–207 are mitochondrial matrix; the sequence is LQRTMIRYFTSNPASKVLCS. A helical membrane pass occupies residues 208-230; it reads PMLLSTFSHFSLFHMAANMYVLW. Residues 231 to 244 are Mitochondrial intermembrane-facing; sequence SFSSSIVNILGQEQ. The helical transmembrane segment at 245 to 262 threads the bilayer; sequence FMAVYLSAGVISNFVSYV. Residues 263–273 lie on the Mitochondrial matrix side of the membrane; it reads GKVATGRYGPS. The helical transmembrane segment at 274–292 threads the bilayer; sequence LGASGAIMTVLAAVCTKIP. S277 (nucleophile) is an active-site residue. Over 293-295 the chain is Mitochondrial intermembrane; it reads EGR. The chain crosses the membrane as a helical span at residues 296 to 318; sequence LAIIFLPMFTFTAGNALKAIIAM. The Mitochondrial matrix portion of the chain corresponds to 319 to 332; that stretch reads DTAGMILGWKFFDH. A helical transmembrane segment spans residues 333 to 354; sequence AAHLGGALFGIWYVTYGHELIW. H335 is an active-site residue. At 355 to 379 the chain is on the mitochondrial intermembrane side; the sequence is KNREPLVKIWHEIRTNGPKKGGGSK.

The protein belongs to the peptidase S54 family. Interacts with PSEN1 and PSEN2. Binds OPA1. P-beta is proteolytically processed (beta-cleavage) in a PARL-dependent manner.

The protein resides in the mitochondrion inner membrane. Its subcellular location is the nucleus. It carries out the reaction Cleaves type-1 transmembrane domains using a catalytic dyad composed of serine and histidine that are contributed by different transmembrane domains.. In terms of biological role, required for the control of apoptosis during postnatal growth. Essential for proteolytic processing of an antiapoptotic form of OPA1 which prevents the release of mitochondrial cytochrome c in response to intrinsic apoptotic signals. Required for the maturation of PINK1 into its 52kDa mature form after its cleavage by mitochondrial-processing peptidase (MPP). Promotes cleavage of serine/threonine-protein phosphatase PGAM5 in damaged mitochondria in response to loss of mitochondrial membrane potential. Mediates differential cleavage of PINK1 and PGAM5 depending on the health status of mitochondria, disassociating from PINK1 and associating with PGAM5 in response to mitochondrial membrane potential loss. Required for processing of CLPB into a form with higher protein disaggregase activity by removing an autoinhibitory N-terminal peptide. Promotes processing of DIABLO/SMAC in the mitochondrion which is required for DIABLO apoptotic activity. Also required for cleavage of STARD7 and TTC19. Promotes changes in mitochondria morphology regulated by phosphorylation of P-beta domain. This Pongo abelii (Sumatran orangutan) protein is Presenilin-associated rhomboid-like protein, mitochondrial (PARL).